The following is a 1058-amino-acid chain: Carbamoyl phosphate synthase large chain (1058 aa).

The segment at 1–401 (MPKRTDIQKI…SLLKACRSLE (401 aa)) is carboxyphosphate synthetic domain. Arginine 129, arginine 169, glycine 175, glycine 176, arginine 208, isoleucine 210, glutamate 215, glycine 241, isoleucine 242, histidine 243, glutamine 284, and glutamate 298 together coordinate ATP. Residues 133 to 327 (KQLMEELEQP…IAKLAAKIAV (195 aa)) enclose the ATP-grasp 1 domain. Mg(2+) is bound by residues glutamine 284, glutamate 298, and asparagine 300. 3 residues coordinate Mn(2+): glutamine 284, glutamate 298, and asparagine 300. Positions 402–546 (IGVHHNEIPE…YSTYGWENES (145 aa)) are oligomerization domain. The carbamoyl phosphate synthetic domain stretch occupies residues 547 to 929 (IKSDKESVLV…ALYKAFEASY (383 aa)). In terms of domain architecture, ATP-grasp 2 spans 671–861 (EQALKELDIP…MAQVATKLIL (191 aa)). The ATP site is built by arginine 707, serine 746, isoleucine 748, glutamate 752, glycine 777, valine 778, histidine 779, serine 780, glutamine 820, and glutamate 832. Mg(2+) contacts are provided by glutamine 820, glutamate 832, and asparagine 834. The Mn(2+) site is built by glutamine 820, glutamate 832, and asparagine 834. An MGS-like domain is found at 930 to 1058 (LHLPTFGNVV…ESRSFVTEAI (129 aa)). An allosteric domain region spans residues 930 to 1058 (LHLPTFGNVV…ESRSFVTEAI (129 aa)).

It belongs to the CarB family. Composed of two chains; the small (or glutamine) chain promotes the hydrolysis of glutamine to ammonia, which is used by the large (or ammonia) chain to synthesize carbamoyl phosphate. Tetramer of heterodimers (alpha,beta)4. The cofactor is Mg(2+). Requires Mn(2+) as cofactor.

It catalyses the reaction hydrogencarbonate + L-glutamine + 2 ATP + H2O = carbamoyl phosphate + L-glutamate + 2 ADP + phosphate + 2 H(+). It carries out the reaction hydrogencarbonate + NH4(+) + 2 ATP = carbamoyl phosphate + 2 ADP + phosphate + 2 H(+). The protein operates within amino-acid biosynthesis; L-arginine biosynthesis; carbamoyl phosphate from bicarbonate: step 1/1. It functions in the pathway pyrimidine metabolism; UMP biosynthesis via de novo pathway; (S)-dihydroorotate from bicarbonate: step 1/3. Its function is as follows. Large subunit of the glutamine-dependent carbamoyl phosphate synthetase (CPSase). CPSase catalyzes the formation of carbamoyl phosphate from the ammonia moiety of glutamine, carbonate, and phosphate donated by ATP, constituting the first step of 2 biosynthetic pathways, one leading to arginine and/or urea and the other to pyrimidine nucleotides. The large subunit (synthetase) binds the substrates ammonia (free or transferred from glutamine from the small subunit), hydrogencarbonate and ATP and carries out an ATP-coupled ligase reaction, activating hydrogencarbonate by forming carboxy phosphate which reacts with ammonia to form carbamoyl phosphate. The chain is Carbamoyl phosphate synthase large chain from Streptococcus pneumoniae (strain ATCC 700669 / Spain 23F-1).